The following is a 664-amino-acid chain: Bifunctional polymyxin resistance protein ArnA (664 aa).

Positions 1 to 308 (MSTKAVVFAY…EFGLVAGSQM (308 aa)) are formyltransferase ArnAFT. Residue His-106 is the Proton donor; for formyltransferase activity of the active site. Residues Arg-116 and 138 to 142 (VKRAD) contribute to the (6R)-10-formyltetrahydrofolate site. The tract at residues 318–664 (RRTRVLILGV…EAMAEKADQC (347 aa)) is dehydrogenase ArnADH. NAD(+)-binding positions include Asp-351 and 372–373 (DI). UDP-alpha-D-glucuronate contacts are provided by residues Ala-397, Tyr-402, and 436 to 437 (TS). The active-site Proton acceptor; for decarboxylase activity is the Glu-438. Residues Arg-464, Asn-495, 529-538 (RLVDGGAQKR), and Tyr-616 each bind UDP-alpha-D-glucuronate. Catalysis depends on Arg-622, which acts as the Proton donor; for decarboxylase activity.

In the N-terminal section; belongs to the Fmt family. UDP-L-Ara4N formyltransferase subfamily. This sequence in the C-terminal section; belongs to the NAD(P)-dependent epimerase/dehydratase family. UDP-glucuronic acid decarboxylase subfamily. In terms of assembly, homohexamer, formed by a dimer of trimers.

It carries out the reaction UDP-alpha-D-glucuronate + NAD(+) = UDP-beta-L-threo-pentopyranos-4-ulose + CO2 + NADH. The catalysed reaction is UDP-4-amino-4-deoxy-beta-L-arabinose + (6R)-10-formyltetrahydrofolate = UDP-4-deoxy-4-formamido-beta-L-arabinose + (6S)-5,6,7,8-tetrahydrofolate + H(+). It functions in the pathway nucleotide-sugar biosynthesis; UDP-4-deoxy-4-formamido-beta-L-arabinose biosynthesis; UDP-4-deoxy-4-formamido-beta-L-arabinose from UDP-alpha-D-glucuronate: step 1/3. The protein operates within nucleotide-sugar biosynthesis; UDP-4-deoxy-4-formamido-beta-L-arabinose biosynthesis; UDP-4-deoxy-4-formamido-beta-L-arabinose from UDP-alpha-D-glucuronate: step 3/3. It participates in bacterial outer membrane biogenesis; lipopolysaccharide biosynthesis. In terms of biological role, bifunctional enzyme that catalyzes the oxidative decarboxylation of UDP-glucuronic acid (UDP-GlcUA) to UDP-4-keto-arabinose (UDP-Ara4O) and the addition of a formyl group to UDP-4-amino-4-deoxy-L-arabinose (UDP-L-Ara4N) to form UDP-L-4-formamido-arabinose (UDP-L-Ara4FN). The modified arabinose is attached to lipid A and is required for resistance to polymyxin and cationic antimicrobial peptides. The protein is Bifunctional polymyxin resistance protein ArnA of Pseudomonas syringae pv. syringae (strain B728a).